The chain runs to 356 residues: Zinc finger CW-type PWWP domain protein 2 (356 aa).

The segment at 24-79 (MYVNKVWVQCENENCLKWRLLSSEDSAKVDHDEPWYCFMNTDSRYNNCSISEEDFP) adopts a CW-type zinc-finger fold. 4 residues coordinate Zn(2+): Cys-33, Cys-38, Cys-60, and Cys-71. The region spanning 98-162 (LGSLVLVKLQ…ATFVGHYSIT (65 aa)) is the PWWP domain. Residues 279–307 (QALQPTATPDESEEGHGEEINMGEKLSKC) form a disordered region.

Its function is as follows. Histone methylation reader which binds to non-methylated (H3K4me0), monomethylated (H3K4me1), dimethylated (H3K4me2) and trimethylated (H3K4me3) 'Lys-4' on histone H3. The order of binding preference is H3K4me3 &gt; H3K4me2 &gt; H3K4me1 &gt; H3K4me0. This Homo sapiens (Human) protein is Zinc finger CW-type PWWP domain protein 2 (ZCWPW2).